A 683-amino-acid polypeptide reads, in one-letter code: Amino acid transporter heavy chain SLC3A1 (683 aa).

Over residues 1–10 the composition is skewed to basic and acidic residues; it reads MNEDKDKRDS. The disordered stretch occupies residues 1–50; it reads MNEDKDKRDSIQMSMKGCRTNNGFVQNEDIQEQDPDSRDTPQSNAVSIPA. The Cytoplasmic segment spans residues 1 to 86; it reads MNEDKDKRDS…ARYRVPREIL (86 aa). Ser-10 carries the post-translational modification Phosphoserine. Residues 87–107 traverse the membrane as a helical; Signal-anchor for type II membrane protein segment; that stretch reads FWLTVVSVFLLIGATIAIIII. Residues 108 to 683 lie on the Extracellular side of the membrane; it reads SPKCLDWWQA…SVLDLLYSSC (576 aa). Asn-211 is a Ca(2+) binding site. 3 N-linked (GlcNAc...) asparagine glycosylation sites follow: Asn-211, Asn-238, and Asn-258. Residues Cys-239 and Cys-270 are joined by a disulfide bond. Ca(2+)-binding residues include Asp-281, Phe-315, Leu-316, and Glu-318. Asn-329 carries N-linked (GlcNAc...) asparagine glycosylation. Ser-383 carries the phosphoserine modification. Asn-510, Asn-520, and Asn-574 each carry an N-linked (GlcNAc...) asparagine glycan. Intrachain disulfides connect Cys-568/Cys-664 and Cys-671/Cys-683.

As to quaternary structure, disulfide-linked heterodimer composed of the catalytic light subunit SLC7A9 and the heavy subunit SLC3A1. The heterodimer is the minimal functional unit. Assembles in non-covalently linked heterotetramers (dimers of heterodimers) and higher order oligomers; the oligomerization is mediated by SLC3A1 likely to prevent degradation in the endoplasmic reticulum and facilitate heteromer trafficking to the plasma membrane. Disulfide-linked heterodimer composed of the catalytic light subunit SLC7A13 and the heavy subunit SLC3A1. As to expression, predominantly expressed in kidney and intestine. In kidney localized to the apical membrane of the proximal tubules.

It localises to the cell membrane. The protein resides in the apical cell membrane. In terms of biological role, acts as a chaperone that facilitates biogenesis and trafficking of functional transporter heteromers to the plasma membrane. Associates with SLC7A9 to form a functional transporter complex that mediates the electrogenic exchange between cationic amino acids and neutral amino acids, with a stoichiometry of 1:1. SLC7A9-SLC3A1 transporter has system b(0,+)-like activity with high affinity for extracellular cationic amino acids and L-cystine and lower affinity for intracellular neutral amino acids. Substrate exchange is driven by high concentration of intracellular neutral amino acids and the intracellular reduction of L-cystine to L-cysteine. SLC7A9-SLC3A1 acts as a major transporter for reabsorption of L-cystine and dibasic amino acids across the brush border membrane in early proximal tubules. Associates with SLC7A13 to form a functional complex that transports anionic and neutral amino acids via exchange or facilitated diffusion. SLC7A13-SLC3A1 may act as a major transporter for L-cystine in late proximal tubules, ensuring its reabsorption from the luminal fluid in exchange for cytosolic L-glutamate or L-aspartate. The polypeptide is Amino acid transporter heavy chain SLC3A1 (Slc3a1) (Rattus norvegicus (Rat)).